Consider the following 131-residue polypeptide: Small ribosomal subunit protein uS8 (131 aa).

The protein belongs to the universal ribosomal protein uS8 family. Part of the 30S ribosomal subunit. Contacts proteins S5 and S12.

Its function is as follows. One of the primary rRNA binding proteins, it binds directly to 16S rRNA central domain where it helps coordinate assembly of the platform of the 30S subunit. This chain is Small ribosomal subunit protein uS8, found in Sulfurimonas denitrificans (strain ATCC 33889 / DSM 1251) (Thiomicrospira denitrificans (strain ATCC 33889 / DSM 1251)).